The sequence spans 366 residues: Holliday junction branch migration complex subunit RuvB (366 aa).

The interval 1–49 is disordered; sequence MAIISSKKQPPEPNGQPNKRPESAPSVPKEKVLQPEAAIDEQGKQEESI. A large ATPase domain (RuvB-L) region spans residues 13 to 210; sequence PNGQPNKRPE…FGLIQKLRFY (198 aa). ATP contacts are provided by residues Ile49, Arg50, Gly91, Lys94, Thr95, Thr96, 157–159, Arg200, Tyr210, and Arg247; that span reads EDY. Thr95 serves as a coordination point for Mg(2+). Positions 211 to 281 are small ATPAse domain (RuvB-S); it reads EVDELSQIVL…IAAEALQLFQ (71 aa). The tract at residues 284–366 is head domain (RuvB-H); it reads PCGLDWTDRR…TPPNEQLSLL (83 aa). 2 residues coordinate DNA: Arg339 and Arg344.

The protein belongs to the RuvB family. Homohexamer. Forms an RuvA(8)-RuvB(12)-Holliday junction (HJ) complex. HJ DNA is sandwiched between 2 RuvA tetramers; dsDNA enters through RuvA and exits via RuvB. An RuvB hexamer assembles on each DNA strand where it exits the tetramer. Each RuvB hexamer is contacted by two RuvA subunits (via domain III) on 2 adjacent RuvB subunits; this complex drives branch migration. In the full resolvosome a probable DNA-RuvA(4)-RuvB(12)-RuvC(2) complex forms which resolves the HJ.

It localises to the cytoplasm. The enzyme catalyses ATP + H2O = ADP + phosphate + H(+). The RuvA-RuvB-RuvC complex processes Holliday junction (HJ) DNA during genetic recombination and DNA repair, while the RuvA-RuvB complex plays an important role in the rescue of blocked DNA replication forks via replication fork reversal (RFR). RuvA specifically binds to HJ cruciform DNA, conferring on it an open structure. The RuvB hexamer acts as an ATP-dependent pump, pulling dsDNA into and through the RuvAB complex. RuvB forms 2 homohexamers on either side of HJ DNA bound by 1 or 2 RuvA tetramers; 4 subunits per hexamer contact DNA at a time. Coordinated motions by a converter formed by DNA-disengaged RuvB subunits stimulates ATP hydrolysis and nucleotide exchange. Immobilization of the converter enables RuvB to convert the ATP-contained energy into a lever motion, pulling 2 nucleotides of DNA out of the RuvA tetramer per ATP hydrolyzed, thus driving DNA branch migration. The RuvB motors rotate together with the DNA substrate, which together with the progressing nucleotide cycle form the mechanistic basis for DNA recombination by continuous HJ branch migration. Branch migration allows RuvC to scan DNA until it finds its consensus sequence, where it cleaves and resolves cruciform DNA. The protein is Holliday junction branch migration complex subunit RuvB of Nostoc sp. (strain PCC 7120 / SAG 25.82 / UTEX 2576).